A 919-amino-acid chain; its full sequence is Probable dipeptidyl-aminopeptidase B (919 aa).

Basic and acidic residues predominate over residues 1–10 (MRPSDDHGET). The tract at residues 1-50 (MRPSDDHGETSEFLPITRSRSVSAASQTSTDSSLSTESLFPGEQKPFPNV) is disordered. Over 1–92 (MRPSDDHGET…AATGGGRARR (92 aa)) the chain is Cytoplasmic. A compositionally biased stretch (low complexity) spans 21-38 (SVSAASQTSTDSSLSTES). Residues 93–113 (IFWILVLLCLGGWLLAFALFL) traverse the membrane as a helical; Signal-anchor for type II membrane protein segment. Topologically, residues 114–919 (TGGRANYQTA…MKRSLPLLYP (806 aa)) are vacuolar. 3 N-linked (GlcNAc...) asparagine glycosylation sites follow: N200, N352, and N643. S757 serves as the catalytic Charge relay system. N811 is a glycosylation site (N-linked (GlcNAc...) asparagine). Catalysis depends on charge relay system residues D834 and H867.

Belongs to the peptidase S9B family.

The protein localises to the vacuole membrane. It carries out the reaction Release of an N-terminal dipeptide, Xaa-Yaa-|-Zaa-, from a polypeptide, preferentially when Yaa is Pro, provided Zaa is neither Pro nor hydroxyproline.. Type IV dipeptidyl-peptidase which removes N-terminal dipeptides sequentially from polypeptides having unsubstituted N-termini provided that the penultimate residue is proline. This is Probable dipeptidyl-aminopeptidase B (dapB) from Neosartorya fischeri (strain ATCC 1020 / DSM 3700 / CBS 544.65 / FGSC A1164 / JCM 1740 / NRRL 181 / WB 181) (Aspergillus fischerianus).